Consider the following 347-residue polypeptide: Fructose-1,6-bisphosphatase class 1 (347 aa).

Positions 106, 128, 130, and 131 each coordinate Mg(2+). Residues 131–134 (DGSS), asparagine 223, tyrosine 251, and lysine 281 contribute to the substrate site. Position 287 (glutamate 287) interacts with Mg(2+).

Belongs to the FBPase class 1 family. Homotetramer. Mg(2+) is required as a cofactor.

The protein localises to the cytoplasm. It carries out the reaction beta-D-fructose 1,6-bisphosphate + H2O = beta-D-fructose 6-phosphate + phosphate. It participates in carbohydrate biosynthesis; Calvin cycle. The polypeptide is Fructose-1,6-bisphosphatase class 1 (Synechocystis sp. (strain ATCC 27184 / PCC 6803 / Kazusa)).